The chain runs to 429 residues: Light-independent protochlorophyllide reductase subunit N (429 aa).

Residues C32, C57, and C118 each coordinate [4Fe-4S] cluster.

Belongs to the BchN/ChlN family. Protochlorophyllide reductase is composed of three subunits; BchL, BchN and BchB. Forms a heterotetramer of two BchB and two BchN subunits. Requires [4Fe-4S] cluster as cofactor.

The catalysed reaction is chlorophyllide a + oxidized 2[4Fe-4S]-[ferredoxin] + 2 ADP + 2 phosphate = protochlorophyllide a + reduced 2[4Fe-4S]-[ferredoxin] + 2 ATP + 2 H2O. It participates in porphyrin-containing compound metabolism; bacteriochlorophyll biosynthesis (light-independent). Functionally, component of the dark-operative protochlorophyllide reductase (DPOR) that uses Mg-ATP and reduced ferredoxin to reduce ring D of protochlorophyllide (Pchlide) to form chlorophyllide a (Chlide). This reaction is light-independent. The NB-protein (BchN-BchB) is the catalytic component of the complex. This is Light-independent protochlorophyllide reductase subunit N from Rhodopseudomonas palustris (strain TIE-1).